A 345-amino-acid polypeptide reads, in one-letter code: Protease HtpX homolog (345 aa).

2 consecutive transmembrane segments (helical) span residues 6–26 (TAMLLAFMTALFMGVGYLVGG) and 27–47 (SNGMVIALLMAGGLNFFSYWN). Zn(2+) is bound at residue H130. The active site involves E131. H134 contributes to the Zn(2+) binding site. A run of 2 helical transmembrane segments spans residues 145 to 165 (LTATIAGAISMLGNFAFFMGG) and 179 to 199 (IGGLLALFVAPFAAMLVQMAI). Zn(2+) is bound at residue E204.

It belongs to the peptidase M48B family. Zn(2+) is required as a cofactor.

It is found in the cell inner membrane. The protein is Protease HtpX homolog of Bartonella henselae (strain ATCC 49882 / DSM 28221 / CCUG 30454 / Houston 1) (Rochalimaea henselae).